We begin with the raw amino-acid sequence, 490 residues long: Acetyl-coenzyme A carboxylase carboxyl transferase subunit beta, chloroplastic (490 aa).

The tract at residues 184–203 (LNSSENEGSSRRTRTKGSDL) is disordered. In terms of domain architecture, CoA carboxyltransferase N-terminal spans 221–490 (LWVQCENCYG…PLNQKSSKIK (270 aa)). Zn(2+)-binding residues include C225, C228, C244, and C247. The segment at 225-247 (CENCYGLNYKKFLKSKMNICEQC) adopts a C4-type zinc-finger fold.

Belongs to the AccD/PCCB family. In terms of assembly, acetyl-CoA carboxylase is a heterohexamer composed of biotin carboxyl carrier protein, biotin carboxylase and 2 subunits each of ACCase subunit alpha and ACCase plastid-coded subunit beta (accD). The cofactor is Zn(2+).

Its subcellular location is the plastid. It localises to the chloroplast stroma. It carries out the reaction N(6)-carboxybiotinyl-L-lysyl-[protein] + acetyl-CoA = N(6)-biotinyl-L-lysyl-[protein] + malonyl-CoA. Its pathway is lipid metabolism; malonyl-CoA biosynthesis; malonyl-CoA from acetyl-CoA: step 1/1. Its function is as follows. Component of the acetyl coenzyme A carboxylase (ACC) complex. Biotin carboxylase (BC) catalyzes the carboxylation of biotin on its carrier protein (BCCP) and then the CO(2) group is transferred by the transcarboxylase to acetyl-CoA to form malonyl-CoA. This Solanum bulbocastanum (Wild potato) protein is Acetyl-coenzyme A carboxylase carboxyl transferase subunit beta, chloroplastic.